The sequence spans 517 residues: Steroid 17-alpha-hydroxylase/17,20 lyase (517 aa).

Heme is bound at residue Cys-451.

This sequence belongs to the cytochrome P450 family. Requires heme as cofactor.

The protein localises to the membrane. It catalyses the reaction a C21-steroid + reduced [NADPH--hemoprotein reductase] + O2 = a 17alpha-hydroxy-C21-steroid + oxidized [NADPH--hemoprotein reductase] + H2O + H(+). The enzyme catalyses 17alpha-hydroxyprogesterone + reduced [NADPH--hemoprotein reductase] + O2 = androst-4-ene-3,17-dione + acetate + oxidized [NADPH--hemoprotein reductase] + H2O + 2 H(+). It carries out the reaction 17alpha-hydroxypregnenolone + reduced [NADPH--hemoprotein reductase] + O2 = 3beta-hydroxyandrost-5-en-17-one + acetate + oxidized [NADPH--hemoprotein reductase] + H2O + 2 H(+). Its pathway is lipid metabolism; steroid biosynthesis. Its function is as follows. Conversion of pregnenolone and progesterone to their 17-alpha-hydroxylated products and subsequently to dehydroepiandrosterone (DHEA) and androstenedione. Catalyzes both the 17-alpha-hydroxylation and the 17,20-lyase reaction. The protein is Steroid 17-alpha-hydroxylase/17,20 lyase (cyp17a1) of Oryzias latipes (Japanese rice fish).